The primary structure comprises 500 residues: Glycerol kinase (500 aa).

Thr-12 provides a ligand contact to ADP. Thr-12, Thr-13, and Ser-14 together coordinate ATP. Thr-12 is a sn-glycerol 3-phosphate binding site. Arg-16 is an ADP binding site. Sn-glycerol 3-phosphate is bound by residues Arg-82, Glu-83, Tyr-135, and Asp-245. Residues Arg-82, Glu-83, Tyr-135, Asp-245, and Gln-246 each contribute to the glycerol site. The ADP site is built by Thr-267 and Gly-310. 4 residues coordinate ATP: Thr-267, Gly-310, Gln-314, and Gly-411. Residues Gly-411 and Asn-415 each contribute to the ADP site.

This sequence belongs to the FGGY kinase family. Homotetramer and homodimer (in equilibrium).

It carries out the reaction glycerol + ATP = sn-glycerol 3-phosphate + ADP + H(+). The protein operates within polyol metabolism; glycerol degradation via glycerol kinase pathway; sn-glycerol 3-phosphate from glycerol: step 1/1. Activated by phosphorylation and inhibited by fructose 1,6-bisphosphate (FBP). Functionally, key enzyme in the regulation of glycerol uptake and metabolism. Catalyzes the phosphorylation of glycerol to yield sn-glycerol 3-phosphate. The chain is Glycerol kinase from Clostridium perfringens (strain ATCC 13124 / DSM 756 / JCM 1290 / NCIMB 6125 / NCTC 8237 / Type A).